We begin with the raw amino-acid sequence, 322 residues long: Replication factor C small subunit (322 aa).

45–52 (GPPGVGKT) provides a ligand contact to ATP.

The protein belongs to the activator 1 small subunits family. RfcS subfamily. Heteromultimer composed of small subunits (RfcS) and large subunits (RfcL).

Functionally, part of the RFC clamp loader complex which loads the PCNA sliding clamp onto DNA. In Methanocella arvoryzae (strain DSM 22066 / NBRC 105507 / MRE50), this protein is Replication factor C small subunit.